A 115-amino-acid polypeptide reads, in one-letter code: MAQGQGFGFGLGKMKELAAAIQKAQQVQEGAKKLQEDLERMDIEGQAAGGAVKVIMSGTQEPRRVEISPDLLSEGAEVLSDLVTAAMRDAYQKSTATMRERMEELTGSLNVPGLG.

This sequence belongs to the YbaB/EbfC family. As to quaternary structure, homodimer.

The protein localises to the cytoplasm. The protein resides in the nucleoid. Its function is as follows. Binds to DNA and alters its conformation. May be involved in regulation of gene expression, nucleoid organization and DNA protection. The sequence is that of Nucleoid-associated protein tlr0723 from Thermosynechococcus vestitus (strain NIES-2133 / IAM M-273 / BP-1).